Here is a 233-residue protein sequence, read N- to C-terminus: MKKTIMASSLAVALGVTGYAASTGHEAHAAEMNVDQAHLVDLAHNHQDQLNAAPIKDGAYDIHFVKDGFQYNFTSNGTTWSWSYEAANGQTAGFSNVAGADYTTSYNQGSNVQSVSYNAQSSNSNVEAVSAPTYHNYSTSTTSSSVRLSNGNTAGATGSSAAQIMAQRTGVSASTWAAIIARESNGQVNAYNPSGASGLFQTMPGWGPTNTVDQQINAAVKAYKAQGLSAWGF.

The signal sequence occupies residues 1-29 (MKKTIMASSLAVALGVTGYAASTGHEAHA).

Belongs to the transglycosylase family. IsaA subfamily.

The protein localises to the secreted. Its function is as follows. Is able to cleave peptidoglycan. This chain is Probable transglycosylase IsaA (isaA), found in Staphylococcus aureus (strain bovine RF122 / ET3-1).